The following is a 744-amino-acid chain: FNIP repeat-containing protein cigB (744 aa).

FNIP repeat units lie at residues 340–376 (FNQKLTKGIIPEGVKVLYIGDIKQELIIDSIPNTVTT), 383–422 (FNQKLTKGIIPEGVKELRLGDIKQELIIDSIPSTLTTVIL), 426–462 (FNQKLTKGIIPEGVKVLYIGDIKQELIIDSIPNTVTR), 469–508 (FNQKLTKGIIPESVKELHIGNIKQELIIDSIPNTVTTITL), 512–550 (FNQKLTKGIIPEGVKELYIGNLKQELIIDSIPNTVTTVR), 555–594 (FNQKLTKGIIPEGVKELYIRDIKQELIIDSIPNTVTTVIL), 598–635 (FNQKLTKGIIPEWVKGLCLGDIKQELIIDSIPNTVTTV), 641–678 (FNQKLTKGIIPESVKELYIDDIKQELIIDSIPNTVTTV), and 684–723 (FNQKLTKGIIPEWVKELHIGDIKQELIIDSIPNTLNNVYI).

This chain is FNIP repeat-containing protein cigB (cigB), found in Dictyostelium discoideum (Social amoeba).